Here is a 460-residue protein sequence, read N- to C-terminus: MGESVLSRLGQWISSTPLRSLDRAYEAALRIKAIEDRYFQGGSIGSNGNHGQNTSRYFQIQLRQELRQIDLSLAEFRASSVFSRLPDPEQNGSGPPFSSDKDQAKEAPVGPSENDGKDAENGRQSRDPSILEKLEFIDQVTSRYKRPAAQPRSTSPPPKSQEQPEPLTSSQPEPSDPSIKTNLAKTNLDNSNAPVASKTALLPRSILRTANQIRRELSSQAEEELLQEYRSQRTRTLVAVRFLLLLAILPLLVQIFSKHFLFGPLVDRFQPREPTILALSYEFQEKALSEFEFFKEKIEFERALHHQSPELDLESEDQLSKKAEELLQKYSRKNLEGLKNVLADVLSLLVFGWLILIGREEIEVLKSFLDRLIYGLSDSAKAFIIILFTDVFVGYHSPHGWEVLLSSLAAHLGLPENRNFIYGFIATFPVFLDTLFKYWIFRYLNRVSPSAVATYHAMND.

The tract at residues 84-194 (RLPDPEQNGS…KTNLDNSNAP (111 aa)) is disordered. A compositionally biased stretch (basic and acidic residues) spans 114–136 (NDGKDAENGRQSRDPSILEKLEF). The segment covering 167 to 194 (LTSSQPEPSDPSIKTNLAKTNLDNSNAP) has biased composition (polar residues). A run of 4 helical transmembrane segments spans residues 242-262 (FLLL…HFLF), 337-357 (GLKN…LILI), 373-393 (IYGL…DVFV), and 420-440 (FIYG…KYWI).

The protein belongs to the CemA family.

The protein localises to the cell inner membrane. Functionally, required for H(+) efflux immediately after light irradiation to form a rapid H(+) concentration gradient across the thylakoid membranes. Together with PxcL, contributes to transient H(+) uptake following dark to light transition. The sequence is that of Proton extrusion protein PxcA from Synechococcus sp. (strain JA-3-3Ab) (Cyanobacteria bacterium Yellowstone A-Prime).